The sequence spans 266 residues: 3-methyl-2-oxobutanoate hydroxymethyltransferase (266 aa).

The Mg(2+) site is built by aspartate 43 and aspartate 82. Residues 43–44 (DS), aspartate 82, and lysine 110 each bind 3-methyl-2-oxobutanoate. Glutamate 112 is a Mg(2+) binding site. The active-site Proton acceptor is glutamate 179.

Belongs to the PanB family. In terms of assembly, homodecamer; pentamer of dimers. It depends on Mg(2+) as a cofactor.

The protein localises to the cytoplasm. It carries out the reaction 3-methyl-2-oxobutanoate + (6R)-5,10-methylene-5,6,7,8-tetrahydrofolate + H2O = 2-dehydropantoate + (6S)-5,6,7,8-tetrahydrofolate. It functions in the pathway cofactor biosynthesis; (R)-pantothenate biosynthesis; (R)-pantoate from 3-methyl-2-oxobutanoate: step 1/2. Its function is as follows. Catalyzes the reversible reaction in which hydroxymethyl group from 5,10-methylenetetrahydrofolate is transferred onto alpha-ketoisovalerate to form ketopantoate. This is 3-methyl-2-oxobutanoate hydroxymethyltransferase from Psychrobacter cryohalolentis (strain ATCC BAA-1226 / DSM 17306 / VKM B-2378 / K5).